The sequence spans 205 residues: Glycerol-3-phosphate acyltransferase (205 aa).

Over 1–3 (MSA) the chain is Periplasmic. The helical transmembrane segment at 4-24 (IAPGMILFAYLCGSISSAILV) threads the bilayer. Residues 25 to 52 (CRIAGLPDPRESGSGNPGATNVLRIGGK) are Cytoplasmic-facing. The chain crosses the membrane as a helical span at residues 53–73 (GAAVAVLIFDILKGMLPVWGA). Residues 74-80 (YALGVTP) lie on the Periplasmic side of the membrane. The chain crosses the membrane as a helical span at residues 81-101 (FWLGLIAIAACLGHIWPVFFG). At 102-111 (FKGGKGVATA) the chain is on the cytoplasmic side. A helical membrane pass occupies residues 112-132 (FGAIAPIGWDLTGVMAGTWLL). Topologically, residues 133–137 (TVLLS) are periplasmic. A helical transmembrane segment spans residues 138-158 (GYSSLGAIVSALIAPFYVWWF). At 159-205 (KPQFTFPVSMLSCLILLRHHDNIQRLWRRQETKIWTKLKKKRQKDSE) the chain is on the cytoplasmic side.

This sequence belongs to the PlsY family. Probably interacts with PlsX.

It is found in the cell inner membrane. The enzyme catalyses sn-glycerol 3-phosphate + an acyl-CoA = a 1-acyl-sn-glycero-3-phosphate + CoA. It carries out the reaction a fatty acyl-[ACP] + sn-glycerol 3-phosphate = a 1-acyl-sn-glycero-3-phosphate + holo-[ACP]. Its pathway is lipid metabolism; phospholipid metabolism. Its function is as follows. Catalyzes the transfer of an acyl group from acyl-ACP to glycerol-3-phosphate (G3P) to form lysophosphatidic acid (LPA). This enzyme can also utilize acyl-CoA as fatty acyl donor, but not acyl-PO(4). In Salmonella schwarzengrund (strain CVM19633), this protein is Glycerol-3-phosphate acyltransferase.